A 178-amino-acid chain; its full sequence is uncharacterized protein (178 aa).

Positions 1–19 (MKKNIHILGASGVGTSTLG) are cleaved as a signal peptide.

This is an uncharacterized protein from Bacillus subtilis (strain 168).